Consider the following 440-residue polypeptide: uncharacterized protein (440 aa).

A run of 12 helical transmembrane segments spans residues 24-44, 47-67, 93-113, 117-137, 155-175, 183-203, 229-249, 276-296, 323-343, 346-366, 379-399, and 400-420; these read VVIG…APAA, AGSG…CNAI, FWGY…CAAM, VGFY…VVAL, IVAV…GSGA, IGVD…FFAF, LALG…IAVL, VVQI…ILGV, PFRA…TADI, AIGF…ASAL, IPLV…LSSV, and AAGA…RIIT.

It belongs to the amino acid-polyamine-organocation (APC) superfamily.

It is found in the cell membrane. Functionally, probable amino-acid or metabolite transport protein. This is an uncharacterized protein from Mycobacterium bovis (strain ATCC BAA-935 / AF2122/97).